A 317-amino-acid chain; its full sequence is Testis-specific Y-encoded protein 1 (317 aa).

Disordered regions lie at residues 1–39 and 91–118; these read MSRP…FQVV and DEEQ…PGGP. Composition is skewed to basic and acidic residues over residues 15-26 and 95-112; these read QGQEERERRSEE and EQRP…EQGQ.

It belongs to the nucleosome assembly protein (NAP) family. Post-translationally, phosphorylated. As to expression, testis. Probably in spermatogonia.

The protein resides in the cytoplasm. The protein localises to the nucleus. Functionally, may be involved in sperm differentiation and proliferation. In Bos taurus (Bovine), this protein is Testis-specific Y-encoded protein 1 (TSPY1).